Reading from the N-terminus, the 308-residue chain is MNHLTGLFGLPASTLVELLDLAAGYREGLNREPETFAPLLSNRRIALVFFENSTRTRFSFELAARHLGAGTLSFTAASSSVSKGETLSDTIRNLEAMKVDAFVLRHPSSGAADFVTSITNRPVINAGDGTHEHPTQALLDILTLRSYFGKIEGLKIMILGDILHSRVARSNILGLKTLGAEIAVCAPSTLLPGRIDQLGVQVFTNLDKALAWADAAIVLRLQLERATGGYIPSLEEYSAGYGLTDEKFDRLKRLMPVLHPGPINREIEISNMVADRIQPPGYSSSMLMEQVTNGVAVRMAVLHRLLAK.

Positions 55 and 56 each coordinate carbamoyl phosphate. Position 83 (Lys-83) interacts with L-aspartate. Residues Arg-105, His-133, and Gln-136 each contribute to the carbamoyl phosphate site. L-aspartate-binding residues include Arg-166 and Arg-220. Positions 261 and 262 each coordinate carbamoyl phosphate.

The protein belongs to the aspartate/ornithine carbamoyltransferase superfamily. ATCase family. Heterododecamer (2C3:3R2) of six catalytic PyrB chains organized as two trimers (C3), and six regulatory PyrI chains organized as three dimers (R2).

The catalysed reaction is carbamoyl phosphate + L-aspartate = N-carbamoyl-L-aspartate + phosphate + H(+). Its pathway is pyrimidine metabolism; UMP biosynthesis via de novo pathway; (S)-dihydroorotate from bicarbonate: step 2/3. Functionally, catalyzes the condensation of carbamoyl phosphate and aspartate to form carbamoyl aspartate and inorganic phosphate, the committed step in the de novo pyrimidine nucleotide biosynthesis pathway. The protein is Aspartate carbamoyltransferase catalytic subunit of Chlorobaculum parvum (strain DSM 263 / NCIMB 8327) (Chlorobium vibrioforme subsp. thiosulfatophilum).